Reading from the N-terminus, the 358-residue chain is GMP reductase (358 aa).

NADP(+) contacts are provided by residues 26–27 (SR), K78, 130–132 (DVA), and 181–182 (IG). Residues G182, G184, and C187 each contribute to the K(+) site. Catalysis depends on C187, which acts as the Thioimidate intermediate. The active-site Proton donor/acceptor is T189. R190 contacts K(+). Residues 220-222 (DGG), 243-244 (GG), 269-271 (GMS), and 287-291 (RASEG) each bind GMP. Residues M270, 286–287 (YR), and 315–318 (SACT) contribute to the NADP(+) site.

The protein belongs to the IMPDH/GMPR family. GuaC type 1 subfamily. Homotetramer.

It catalyses the reaction IMP + NH4(+) + NADP(+) = GMP + NADPH + 2 H(+). Functionally, catalyzes the irreversible NADPH-dependent deamination of GMP to IMP. It functions in the conversion of nucleobase, nucleoside and nucleotide derivatives of G to A nucleotides, and in maintaining the intracellular balance of A and G nucleotides. This Caenorhabditis elegans protein is GMP reductase.